We begin with the raw amino-acid sequence, 185 residues long: uncharacterized protein (185 aa).

2 helical membrane-spanning segments follow: residues 1–21 and 111–131; these read MMKFLLILIFLASFSFSLTPE and FLWIITGIFTTLTASVIAFAW.

The protein to A.aeolicus aq_1900.

It localises to the cell membrane. This is an uncharacterized protein from Aquifex aeolicus (strain VF5).